Consider the following 731-residue polypeptide: Ribonuclease R (731 aa).

Residues 260–589 (RTDLRHFPFF…LHRVIKYLLF (330 aa)) form the RNB domain. Positions 647 to 728 (GCILNGVISN…NEKKIELSLY (82 aa)) constitute an S1 motif domain.

It belongs to the RNR ribonuclease family. RNase R subfamily. Monomer.

Its subcellular location is the cytoplasm. It catalyses the reaction Exonucleolytic cleavage in the 3'- to 5'-direction to yield nucleoside 5'-phosphates.. Its function is as follows. 3'-5' exoribonuclease that releases 5'-nucleoside monophosphates and is involved in maturation of structured RNAs. The chain is Ribonuclease R from Buchnera aphidicola subsp. Acyrthosiphon pisum (strain APS) (Acyrthosiphon pisum symbiotic bacterium).